Reading from the N-terminus, the 361-residue chain is Ribosomal RNA large subunit methyltransferase M (361 aa).

S-adenosyl-L-methionine is bound by residues Ser186, 219–222 (CPGG), Asp238, Asp258, and Asp275. The active-site Proton acceptor is Lys304.

The protein belongs to the class I-like SAM-binding methyltransferase superfamily. RNA methyltransferase RlmE family. RlmM subfamily. Monomer.

The protein localises to the cytoplasm. The catalysed reaction is cytidine(2498) in 23S rRNA + S-adenosyl-L-methionine = 2'-O-methylcytidine(2498) in 23S rRNA + S-adenosyl-L-homocysteine + H(+). In terms of biological role, catalyzes the 2'-O-methylation at nucleotide C2498 in 23S rRNA. This is Ribosomal RNA large subunit methyltransferase M from Pseudoalteromonas translucida (strain TAC 125).